The sequence spans 361 residues: Histidinol-phosphate aminotransferase (361 aa).

Lys-223 is modified (N6-(pyridoxal phosphate)lysine).

It belongs to the class-II pyridoxal-phosphate-dependent aminotransferase family. Histidinol-phosphate aminotransferase subfamily. As to quaternary structure, homodimer. Pyridoxal 5'-phosphate serves as cofactor.

It catalyses the reaction L-histidinol phosphate + 2-oxoglutarate = 3-(imidazol-4-yl)-2-oxopropyl phosphate + L-glutamate. The protein operates within amino-acid biosynthesis; L-histidine biosynthesis; L-histidine from 5-phospho-alpha-D-ribose 1-diphosphate: step 7/9. The protein is Histidinol-phosphate aminotransferase of Deinococcus radiodurans (strain ATCC 13939 / DSM 20539 / JCM 16871 / CCUG 27074 / LMG 4051 / NBRC 15346 / NCIMB 9279 / VKM B-1422 / R1).